The chain runs to 113 residues: U11-theraphotoxin-Hhn1a (113 aa).

An N-terminal signal peptide occupies residues 1 to 21 (MNTVRVTFLLVFVLAVSLGQA). The propeptide occupies 22–74 (DKDENRMEMQKKTEQGKSYLDFAENLLLQKLEELEAKLLEEDSEESRNSRQKR). Intrachain disulfides connect Cys75–Cys90, Cys82–Cys95, and Cys89–Cys110.

This sequence belongs to the neurotoxin 14 (magi-1) family. 01 (HNTX-16) subfamily. As to expression, expressed by the venom gland.

Its subcellular location is the secreted. In terms of biological role, probable ion channel inhibitor. This is U11-theraphotoxin-Hhn1a from Cyriopagopus hainanus (Chinese bird spider).